The chain runs to 281 residues: DegV domain-containing protein DR_1986 (281 aa).

The DegV domain maps to 3–278; that stretch reads IAIVTDSTSD…PGAVGVALEP (276 aa). Residues T61 and S93 each contribute to the hexadecanoate site.

Its function is as follows. May bind long-chain fatty acids, such as palmitate, and may play a role in lipid transport or fatty acid metabolism. The chain is DegV domain-containing protein DR_1986 from Deinococcus radiodurans (strain ATCC 13939 / DSM 20539 / JCM 16871 / CCUG 27074 / LMG 4051 / NBRC 15346 / NCIMB 9279 / VKM B-1422 / R1).